The primary structure comprises 208 residues: 3-demethoxyubiquinol 3-hydroxylase (208 aa).

Fe cation contacts are provided by Glu57, Glu87, His90, Glu139, Glu171, and His174.

The protein belongs to the COQ7 family. Requires Fe cation as cofactor.

The protein resides in the cell membrane. The enzyme catalyses a 5-methoxy-2-methyl-3-(all-trans-polyprenyl)benzene-1,4-diol + AH2 + O2 = a 3-demethylubiquinol + A + H2O. It functions in the pathway cofactor biosynthesis; ubiquinone biosynthesis. Functionally, catalyzes the hydroxylation of 2-nonaprenyl-3-methyl-6-methoxy-1,4-benzoquinol during ubiquinone biosynthesis. The sequence is that of 3-demethoxyubiquinol 3-hydroxylase from Janthinobacterium sp. (strain Marseille) (Minibacterium massiliensis).